A 431-amino-acid chain; its full sequence is 23S rRNA (uracil(1939)-C(5))-methyltransferase RlmD (431 aa).

The TRAM domain occupies 10-68; sequence RVTTRQIITVKVNDLDSFGQGVARHNGKALFIPGLLPEESAEVIITEDKKQFARARVSR. Residues C81, C87, C90, and C161 each contribute to the [4Fe-4S] cluster site. 6 residues coordinate S-adenosyl-L-methionine: Q264, F293, N298, E314, N341, and D362. The active-site Nucleophile is the C388.

This sequence belongs to the class I-like SAM-binding methyltransferase superfamily. RNA M5U methyltransferase family. RlmD subfamily.

It catalyses the reaction uridine(1939) in 23S rRNA + S-adenosyl-L-methionine = 5-methyluridine(1939) in 23S rRNA + S-adenosyl-L-homocysteine + H(+). Its function is as follows. Catalyzes the formation of 5-methyl-uridine at position 1939 (m5U1939) in 23S rRNA. The sequence is that of 23S rRNA (uracil(1939)-C(5))-methyltransferase RlmD from Salmonella typhi.